We begin with the raw amino-acid sequence, 413 residues long: Gamma-glutamyl phosphate reductase (413 aa).

The protein belongs to the gamma-glutamyl phosphate reductase family.

The protein resides in the cytoplasm. It catalyses the reaction L-glutamate 5-semialdehyde + phosphate + NADP(+) = L-glutamyl 5-phosphate + NADPH + H(+). It participates in amino-acid biosynthesis; L-proline biosynthesis; L-glutamate 5-semialdehyde from L-glutamate: step 2/2. Catalyzes the NADPH-dependent reduction of L-glutamate 5-phosphate into L-glutamate 5-semialdehyde and phosphate. The product spontaneously undergoes cyclization to form 1-pyrroline-5-carboxylate. The polypeptide is Gamma-glutamyl phosphate reductase (Lactococcus lactis subsp. cremoris (strain SK11)).